The sequence spans 289 residues: tRNA dimethylallyltransferase (289 aa).

Position 9-16 (9-16) interacts with ATP; it reads GTTASGKT. Position 11-16 (11-16) interacts with substrate; sequence TASGKT. The tract at residues 34–37 is interaction with substrate tRNA; the sequence is DSLC.

The protein belongs to the IPP transferase family. In terms of assembly, monomer. The cofactor is Mg(2+).

The catalysed reaction is adenosine(37) in tRNA + dimethylallyl diphosphate = N(6)-dimethylallyladenosine(37) in tRNA + diphosphate. Functionally, catalyzes the transfer of a dimethylallyl group onto the adenine at position 37 in tRNAs that read codons beginning with uridine, leading to the formation of N6-(dimethylallyl)adenosine (i(6)A). This is tRNA dimethylallyltransferase from Campylobacter jejuni subsp. doylei (strain ATCC BAA-1458 / RM4099 / 269.97).